The chain runs to 343 residues: Putative trace amine-associated receptor 3 (343 aa).

Over 1 to 35 (MDLTYIPEDLSSCPKFVNKILSSHQPLFSCPGDNV) the chain is Extracellular. A helical transmembrane segment spans residues 36 to 56 (FGYDWSHDYPLFGNLVIMVSI). Over 57–68 (SHFKQLHSPTNF) the chain is Cytoplasmic. Residues 69–89 (LILSMATTDFLLGFVIMPYSI) form a helical membrane-spanning segment. The Extracellular portion of the chain corresponds to 90-150 (MRSVESCWYF…TKMTNSTIKQ (61 aa)). A disulfide bridge links Cys104 with Cys189. Asn145 carries N-linked (GlcNAc...) asparagine glycosylation. A helical membrane pass occupies residues 151–168 (LLAFCWSVPALFSFGLVL). The Cytoplasmic segment spans residues 169 to 172 (SEAD). Positions 173 to 186 (VSGMQSYKILVACF) are extracellular Loop 2 (ECL2). A helical membrane pass occupies residues 173–193 (VSGMQSYKILVACFNFCALTF). At 194 to 198 (NKFWG) the chain is on the extracellular side. A helical transmembrane segment spans residues 199 to 223 (TILFTTCFFTPGSIMVGIYGKIFIV). The Cytoplasmic segment spans residues 224–257 (SKQHARVISHVPENTKGAVKKHLSKKKDRKAAKT). The chain crosses the membrane as a helical span at residues 258–278 (LGIVMGVFLACWLPCFLAVLI). Residues 279–287 (DPYLDYSTP) lie on the Extracellular side of the membrane. A helical transmembrane segment spans residues 288–308 (ILILDLLVWLRYFNSTCNPLI). At 309–343 (HGFFNPWFQKAFKYIVSGKIFSSHSETANLFPEAH) the chain is on the cytoplasmic side.

Belongs to the G-protein coupled receptor 1 family. In terms of tissue distribution, not expressed in the pons, thalamus, globus pallidus, caudate, putamen or cerebellum.

The protein localises to the cell membrane. Functionally, putative olfactory receptor activated by several primary trace amines. The chain is Putative trace amine-associated receptor 3 from Homo sapiens (Human).